Consider the following 47-residue polypeptide: Putative beta-neurotoxin (47 aa).

In terms of domain architecture, LCN-type CS-alpha/beta spans 1 to 47; it reads KEGYMGSDGCKMSCVINDQFCDTECQAKLKGSTGYCYFXGLACYXXG. Cystine bridges form between C14-C36 and C21-C43.

In terms of tissue distribution, expressed by the venom gland.

It is found in the secreted. In terms of biological role, causes transient paralysis of the rear legs of and spasms in insects (A.domestica). The protein is Putative beta-neurotoxin of Rhopalurus junceus (Caribbean blue scorpion).